The primary structure comprises 264 residues: MKQYHDLIKTVLEHGVKKEDRTGTGTISMFGYQMRYNLQEGFPLLTTKKLHTRSIFHELLWFLKGETNIKYLHDNKVTIWDEWADENGNLGPVYGKQWRSWETADGRTIDQITNVVEQIKKNPNSRRMLVVAFNPGDVDKMALPPCHAFFQFYVANGKLSCQLYQRSADIFLGVPFNIASYALLTHMIAQVCDLEVGDFVHTLGDAHLYLNHLEQANLQLTREFRPLPQLKLNPAKKDLFDFTYEDIEIIGYDPHPAIKAEVAV.

A dUMP-binding site is contributed by R21. Residue H51 coordinates (6R)-5,10-methylene-5,6,7,8-tetrahydrofolate. A dUMP-binding site is contributed by 126–127 (RR). C146 serves as the catalytic Nucleophile. DUMP is bound by residues 166-169 (RSAD), N177, and 207-209 (HLY). D169 is a (6R)-5,10-methylene-5,6,7,8-tetrahydrofolate binding site. A263 is a (6R)-5,10-methylene-5,6,7,8-tetrahydrofolate binding site.

Belongs to the thymidylate synthase family. Bacterial-type ThyA subfamily. In terms of assembly, homodimer.

The protein resides in the cytoplasm. The enzyme catalyses dUMP + (6R)-5,10-methylene-5,6,7,8-tetrahydrofolate = 7,8-dihydrofolate + dTMP. It functions in the pathway pyrimidine metabolism; dTTP biosynthesis. Catalyzes the reductive methylation of 2'-deoxyuridine-5'-monophosphate (dUMP) to 2'-deoxythymidine-5'-monophosphate (dTMP) while utilizing 5,10-methylenetetrahydrofolate (mTHF) as the methyl donor and reductant in the reaction, yielding dihydrofolate (DHF) as a by-product. This enzymatic reaction provides an intracellular de novo source of dTMP, an essential precursor for DNA biosynthesis. The chain is Thymidylate synthase from Bdellovibrio bacteriovorus (strain ATCC 15356 / DSM 50701 / NCIMB 9529 / HD100).